Reading from the N-terminus, the 198-residue chain is ATP-dependent Clp protease proteolytic subunit (198 aa).

Ser-98 serves as the catalytic Nucleophile. His-123 is an active-site residue.

This sequence belongs to the peptidase S14 family. Fourteen ClpP subunits assemble into 2 heptameric rings which stack back to back to give a disk-like structure with a central cavity, resembling the structure of eukaryotic proteasomes.

It is found in the cytoplasm. The enzyme catalyses Hydrolysis of proteins to small peptides in the presence of ATP and magnesium. alpha-casein is the usual test substrate. In the absence of ATP, only oligopeptides shorter than five residues are hydrolyzed (such as succinyl-Leu-Tyr-|-NHMec, and Leu-Tyr-Leu-|-Tyr-Trp, in which cleavage of the -Tyr-|-Leu- and -Tyr-|-Trp bonds also occurs).. Its function is as follows. Cleaves peptides in various proteins in a process that requires ATP hydrolysis. Has a chymotrypsin-like activity. Plays a major role in the degradation of misfolded proteins. This chain is ATP-dependent Clp protease proteolytic subunit, found in Listeria monocytogenes serovar 1/2a (strain ATCC BAA-679 / EGD-e).